A 351-amino-acid polypeptide reads, in one-letter code: Type II methyltransferase M.DsaV (351 aa).

The SAM-dependent MTase C5-type domain maps to 6-312; sequence LKFIDLFAGI…QKMLSYIDLT (307 aa). C75 is a catalytic residue.

The protein belongs to the class I-like SAM-binding methyltransferase superfamily. C5-methyltransferase family.

The enzyme catalyses a 2'-deoxycytidine in DNA + S-adenosyl-L-methionine = a 5-methyl-2'-deoxycytidine in DNA + S-adenosyl-L-homocysteine + H(+). Its function is as follows. A methylase, recognizes the double-stranded sequence 5'-CCNGG-3', methylates C-2 on both strands, and protects the DNA from cleavage by the DsaV endonuclease. The sequence is that of Type II methyltransferase M.DsaV from Dactylococcopsis salina (Myxobaktron salinum).